The chain runs to 179 residues: ATP synthase subunit delta (179 aa).

This sequence belongs to the ATPase delta chain family. F-type ATPases have 2 components, F(1) - the catalytic core - and F(0) - the membrane proton channel. F(1) has five subunits: alpha(3), beta(3), gamma(1), delta(1), epsilon(1). F(0) has three main subunits: a(1), b(2) and c(10-14). The alpha and beta chains form an alternating ring which encloses part of the gamma chain. F(1) is attached to F(0) by a central stalk formed by the gamma and epsilon chains, while a peripheral stalk is formed by the delta and b chains.

It localises to the cell inner membrane. F(1)F(0) ATP synthase produces ATP from ADP in the presence of a proton or sodium gradient. F-type ATPases consist of two structural domains, F(1) containing the extramembraneous catalytic core and F(0) containing the membrane proton channel, linked together by a central stalk and a peripheral stalk. During catalysis, ATP synthesis in the catalytic domain of F(1) is coupled via a rotary mechanism of the central stalk subunits to proton translocation. Functionally, this protein is part of the stalk that links CF(0) to CF(1). It either transmits conformational changes from CF(0) to CF(1) or is implicated in proton conduction. The polypeptide is ATP synthase subunit delta (Burkholderia mallei (strain SAVP1)).